The sequence spans 513 residues: Ribonuclease Y (513 aa).

A helical membrane pass occupies residues 6 to 26; sequence YIIIAVVIIIICVILGLYVVD. Positions 203-288 constitute a KH domain; that stretch reads TVHVVNLPND…EMVEKAKKEV (86 aa). Residues 329 to 422 form the HD domain; that stretch reads VLKHSIEVSH…VQAADAISAA (94 aa).

Belongs to the RNase Y family.

It localises to the cell membrane. Endoribonuclease that initiates mRNA decay. This chain is Ribonuclease Y, found in Clostridium botulinum (strain Langeland / NCTC 10281 / Type F).